A 66-amino-acid chain; its full sequence is uncharacterized protein (66 aa).

This is an uncharacterized protein from Enterobacteria phage T4 (Bacteriophage T4).